The sequence spans 286 residues: Polyamine aminopropyltransferase (286 aa).

The 234-residue stretch at 9–242 (NGWIDEHHQG…GWWSWTFAAI (234 aa)) folds into the PABS domain. Residue Gln-36 coordinates S-methyl-5'-thioadenosine. The spermidine site is built by His-67 and Asp-91. Residues Glu-111 and 143–144 (NG) contribute to the S-methyl-5'-thioadenosine site. The Proton acceptor role is filled by Asp-162. An S-methyl-5'-thioadenosine-binding site is contributed by Pro-169.

The protein belongs to the spermidine/spermine synthase family. As to quaternary structure, homodimer or homotetramer.

The protein localises to the cytoplasm. It catalyses the reaction S-adenosyl 3-(methylsulfanyl)propylamine + putrescine = S-methyl-5'-thioadenosine + spermidine + H(+). The protein operates within amine and polyamine biosynthesis; spermidine biosynthesis; spermidine from putrescine: step 1/1. Its function is as follows. Catalyzes the irreversible transfer of a propylamine group from the amino donor S-adenosylmethioninamine (decarboxy-AdoMet) to putrescine (1,4-diaminobutane) to yield spermidine. The polypeptide is Polyamine aminopropyltransferase (Prochlorococcus marinus (strain MIT 9313)).